We begin with the raw amino-acid sequence, 948 residues long: Probable DNA-directed RNA polymerase (948 aa).

Active-site residues include Asp-600, Lys-680, and Asp-853.

The protein belongs to the phage and mitochondrial RNA polymerase family.

The protein resides in the mitochondrion. It catalyses the reaction RNA(n) + a ribonucleoside 5'-triphosphate = RNA(n+1) + diphosphate. In terms of biological role, DNA-dependent RNA polymerase catalyzes the transcription of DNA into RNA using the four ribonucleoside triphosphates as substrates. The protein is Probable DNA-directed RNA polymerase of Podospora anserina (Pleurage anserina).